Reading from the N-terminus, the 428-residue chain is 26S proteasome regulatory subunit 7 (428 aa).

An ATP-binding site is contributed by 211–218 (GPPGTGKT).

It belongs to the AAA ATPase family.

Its subcellular location is the cytoplasm. It is found in the nucleus. Its function is as follows. The 26S proteasome is involved in the ATP-dependent degradation of ubiquitinated proteins. The regulatory (or ATPase) complex confers ATP dependency and substrate specificity to the 26S complex. This Dictyostelium discoideum (Social amoeba) protein is 26S proteasome regulatory subunit 7 (psmC2).